Consider the following 260-residue polypeptide: Indole-3-glycerol phosphate synthase (260 aa).

Belongs to the TrpC family.

It catalyses the reaction 1-(2-carboxyphenylamino)-1-deoxy-D-ribulose 5-phosphate + H(+) = (1S,2R)-1-C-(indol-3-yl)glycerol 3-phosphate + CO2 + H2O. It participates in amino-acid biosynthesis; L-tryptophan biosynthesis; L-tryptophan from chorismate: step 4/5. The protein is Indole-3-glycerol phosphate synthase of Neisseria gonorrhoeae (strain NCCP11945).